A 196-amino-acid polypeptide reads, in one-letter code: Dephospho-CoA kinase (196 aa).

The DPCK domain occupies 3-196 (RIGLTGNIGC…KVYEELTRDP (194 aa)). 11–16 (GCGKST) provides a ligand contact to ATP.

This sequence belongs to the CoaE family.

Its subcellular location is the cytoplasm. It carries out the reaction 3'-dephospho-CoA + ATP = ADP + CoA + H(+). It functions in the pathway cofactor biosynthesis; coenzyme A biosynthesis; CoA from (R)-pantothenate: step 5/5. Catalyzes the phosphorylation of the 3'-hydroxyl group of dephosphocoenzyme A to form coenzyme A. This is Dephospho-CoA kinase from Aquifex aeolicus (strain VF5).